Consider the following 139-residue polypeptide: 2S seed storage albumin protein (139 aa).

Positions alanine 1–alanine 15 are cleaved as a signal peptide. IgE-binding stretches follow at residues phenylalanine 16 to aspartate 30, isoleucine 29 to arginine 34, glycine 64 to cysteine 78, tyrosine 65 to histidine 73, glutamine 95 to glutamine 103, arginine 99 to methionine 111, glutamine 102 to methionine 114, glycine 105 to serine 117, glutamate 112 to glycine 126, cysteine 125 to arginine 136, and cysteine 125 to phenylalanine 139. Propeptides lie at residues phenylalanine 16–asparagine 31 and glutamine 58–arginine 71. 4 disulfides stabilise this stretch: cysteine 39-cysteine 88, cysteine 52-cysteine 77, cysteine 78-cysteine 125, and cysteine 90-cysteine 132. The immunodominant epitope. IgE-binding; binds to IgE in 75% of the 20 walnut-allergic patients tested stretch occupies residues glutamine 104–valine 115. The interval arginine 107–glutamate 110 is minimally required for IgE-binding by the immunodominant epitope. Residues arginine 136–phenylalanine 139 constitute a propeptide that is removed on maturation.

Belongs to the 2S seed storage albumins family. The mature protein consists of a small chain and a large chain linked by disulfide bonds. In terms of tissue distribution, expressed in seed (at protein level). Expressed in the peel of mature seed.

Its function is as follows. Seed storage protein. This Juglans regia (English walnut) protein is 2S seed storage albumin protein.